The sequence spans 190 residues: uncharacterized protein (190 aa).

This is an uncharacterized protein from Borreliella burgdorferi (strain ATCC 35210 / DSM 4680 / CIP 102532 / B31) (Borrelia burgdorferi).